We begin with the raw amino-acid sequence, 1223 residues long: DNA-directed RNA polymerase subunit beta' (1223 aa).

Positions 60, 62, 75, and 78 each coordinate Zn(2+). D449, D451, and D453 together coordinate Mg(2+). Zn(2+) contacts are provided by C818, C892, C899, and C902.

Belongs to the RNA polymerase beta' chain family. The RNAP catalytic core consists of 2 alpha, 1 beta, 1 beta' and 1 omega subunit. When a sigma factor is associated with the core the holoenzyme is formed, which can initiate transcription. Mg(2+) is required as a cofactor. Requires Zn(2+) as cofactor.

It carries out the reaction RNA(n) + a ribonucleoside 5'-triphosphate = RNA(n+1) + diphosphate. Functionally, DNA-dependent RNA polymerase catalyzes the transcription of DNA into RNA using the four ribonucleoside triphosphates as substrates. This is DNA-directed RNA polymerase subunit beta' from Lactobacillus gasseri (strain ATCC 33323 / DSM 20243 / BCRC 14619 / CIP 102991 / JCM 1131 / KCTC 3163 / NCIMB 11718 / NCTC 13722 / AM63).